A 204-amino-acid polypeptide reads, in one-letter code: ATP-dependent Clp protease proteolytic subunit (204 aa).

The active-site Nucleophile is the serine 101. Histidine 126 is an active-site residue.

It belongs to the peptidase S14 family. In terms of assembly, component of the chloroplastic Clp protease core complex.

The protein localises to the plastid. It is found in the chloroplast stroma. It carries out the reaction Hydrolysis of proteins to small peptides in the presence of ATP and magnesium. alpha-casein is the usual test substrate. In the absence of ATP, only oligopeptides shorter than five residues are hydrolyzed (such as succinyl-Leu-Tyr-|-NHMec, and Leu-Tyr-Leu-|-Tyr-Trp, in which cleavage of the -Tyr-|-Leu- and -Tyr-|-Trp bonds also occurs).. In terms of biological role, cleaves peptides in various proteins in a process that requires ATP hydrolysis. Has a chymotrypsin-like activity. Plays a major role in the degradation of misfolded proteins. The sequence is that of ATP-dependent Clp protease proteolytic subunit from Anthoceros angustus (Hornwort).